The primary structure comprises 81 residues: Acyl carrier protein (81 aa).

The Carrier domain maps to glutamine 3–glutamine 78. Residue serine 38 is modified to O-(pantetheine 4'-phosphoryl)serine.

It belongs to the acyl carrier protein (ACP) family. 4'-phosphopantetheine is transferred from CoA to a specific serine of apo-ACP by AcpS. This modification is essential for activity because fatty acids are bound in thioester linkage to the sulfhydryl of the prosthetic group.

The protein localises to the cytoplasm. Its pathway is lipid metabolism; fatty acid biosynthesis. In terms of biological role, carrier of the growing fatty acid chain in fatty acid biosynthesis. This is Acyl carrier protein from Crocosphaera subtropica (strain ATCC 51142 / BH68) (Cyanothece sp. (strain ATCC 51142)).